Here is a 149-residue protein sequence, read N- to C-terminus: MIALLQRVTRASVVVNDVTIGAIGAGLMVLLCAERGDTPKEADALLGKLLAYRVFADDAGKMNRSVTDVAGGVLLVPQFTLAADTCSGTRPSFTPAAAPELARSLFDYFVAQAVQRHVQVATGEFGADMQVSLTNDGPVTFWLQVKPAI.

Residues 137–138 (GP) carry the Gly-cisPro motif, important for rejection of L-amino acids motif.

The protein belongs to the DTD family. Homodimer.

Its subcellular location is the cytoplasm. It carries out the reaction glycyl-tRNA(Ala) + H2O = tRNA(Ala) + glycine + H(+). It catalyses the reaction a D-aminoacyl-tRNA + H2O = a tRNA + a D-alpha-amino acid + H(+). An aminoacyl-tRNA editing enzyme that deacylates mischarged D-aminoacyl-tRNAs. Also deacylates mischarged glycyl-tRNA(Ala), protecting cells against glycine mischarging by AlaRS. Acts via tRNA-based rather than protein-based catalysis; rejects L-amino acids rather than detecting D-amino acids in the active site. By recycling D-aminoacyl-tRNA to D-amino acids and free tRNA molecules, this enzyme counteracts the toxicity associated with the formation of D-aminoacyl-tRNA entities in vivo and helps enforce protein L-homochirality. In Herminiimonas arsenicoxydans, this protein is D-aminoacyl-tRNA deacylase.